A 130-amino-acid polypeptide reads, in one-letter code: Phosphoribosyl-AMP cyclohydrolase (130 aa).

Aspartate 77 lines the Mg(2+) pocket. Cysteine 78 contacts Zn(2+). Residues aspartate 79 and aspartate 81 each contribute to the Mg(2+) site. Residues cysteine 95 and cysteine 102 each contribute to the Zn(2+) site.

This sequence belongs to the PRA-CH family. In terms of assembly, homodimer. Mg(2+) is required as a cofactor. The cofactor is Zn(2+).

The protein resides in the cytoplasm. It catalyses the reaction 1-(5-phospho-beta-D-ribosyl)-5'-AMP + H2O = 1-(5-phospho-beta-D-ribosyl)-5-[(5-phospho-beta-D-ribosylamino)methylideneamino]imidazole-4-carboxamide. It participates in amino-acid biosynthesis; L-histidine biosynthesis; L-histidine from 5-phospho-alpha-D-ribose 1-diphosphate: step 3/9. In terms of biological role, catalyzes the hydrolysis of the adenine ring of phosphoribosyl-AMP. The polypeptide is Phosphoribosyl-AMP cyclohydrolase (Pseudomonas savastanoi pv. phaseolicola (strain 1448A / Race 6) (Pseudomonas syringae pv. phaseolicola (strain 1448A / Race 6))).